A 340-amino-acid polypeptide reads, in one-letter code: Putative cystathionine beta-lyase (340 aa).

Residue Lys-208 is modified to N6-(pyridoxal phosphate)lysine.

This sequence belongs to the trans-sulfuration enzymes family. The cofactor is pyridoxal 5'-phosphate.

It carries out the reaction L,L-cystathionine + H2O = L-homocysteine + pyruvate + NH4(+). The enzyme catalyses an S-substituted L-cysteine + H2O = a thiol + pyruvate + NH4(+). It functions in the pathway amino-acid biosynthesis; L-methionine biosynthesis via de novo pathway; L-homocysteine from L-cystathionine: step 1/1. This chain is Putative cystathionine beta-lyase (IRC7), found in Saccharomyces cerevisiae (strain ATCC 204508 / S288c) (Baker's yeast).